Consider the following 685-residue polypeptide: Methionine--tRNA ligase (685 aa).

Positions 142, 145, 155, and 158 each coordinate Zn(2+). The 'KMSKS' region motif lies at 330-334; the sequence is KMSKS. Position 333 (K333) interacts with ATP. A tRNA-binding domain is found at 584–685; it reads DFIKVDLRVA…SGAKPGDKVS (102 aa).

Belongs to the class-I aminoacyl-tRNA synthetase family. MetG type 1 subfamily. As to quaternary structure, homodimer. Requires Zn(2+) as cofactor.

Its subcellular location is the cytoplasm. It carries out the reaction tRNA(Met) + L-methionine + ATP = L-methionyl-tRNA(Met) + AMP + diphosphate. Its function is as follows. Is required not only for elongation of protein synthesis but also for the initiation of all mRNA translation through initiator tRNA(fMet) aminoacylation. The sequence is that of Methionine--tRNA ligase from Acinetobacter baylyi (strain ATCC 33305 / BD413 / ADP1).